The following is a 177-amino-acid chain: Large ribosomal subunit protein uL6 (177 aa).

It belongs to the universal ribosomal protein uL6 family. As to quaternary structure, part of the 50S ribosomal subunit.

This protein binds to the 23S rRNA, and is important in its secondary structure. It is located near the subunit interface in the base of the L7/L12 stalk, and near the tRNA binding site of the peptidyltransferase center. This chain is Large ribosomal subunit protein uL6, found in Natronomonas pharaonis (strain ATCC 35678 / DSM 2160 / CIP 103997 / JCM 8858 / NBRC 14720 / NCIMB 2260 / Gabara) (Halobacterium pharaonis).